The chain runs to 619 residues: 2-succinyl-5-enolpyruvyl-6-hydroxy-3-cyclohexene-1-carboxylate synthase (619 aa).

The segment covering 385-398 has biased composition (polar residues); sequence SSAHQSLAATNSDS. A disordered region spans residues 385-415; the sequence is SSAHQSLAATNSDSSTDDIIENTDEEGSNES. Positions 399–413 are enriched in acidic residues; it reads STDDIIENTDEEGSN.

Belongs to the TPP enzyme family. MenD subfamily. As to quaternary structure, homodimer. Mg(2+) is required as a cofactor. Requires Mn(2+) as cofactor. It depends on thiamine diphosphate as a cofactor.

It carries out the reaction isochorismate + 2-oxoglutarate + H(+) = 5-enolpyruvoyl-6-hydroxy-2-succinyl-cyclohex-3-ene-1-carboxylate + CO2. Its pathway is quinol/quinone metabolism; 1,4-dihydroxy-2-naphthoate biosynthesis; 1,4-dihydroxy-2-naphthoate from chorismate: step 2/7. It participates in quinol/quinone metabolism; menaquinone biosynthesis. In terms of biological role, catalyzes the thiamine diphosphate-dependent decarboxylation of 2-oxoglutarate and the subsequent addition of the resulting succinic semialdehyde-thiamine pyrophosphate anion to isochorismate to yield 2-succinyl-5-enolpyruvyl-6-hydroxy-3-cyclohexene-1-carboxylate (SEPHCHC). The chain is 2-succinyl-5-enolpyruvyl-6-hydroxy-3-cyclohexene-1-carboxylate synthase from Haloquadratum walsbyi (strain DSM 16790 / HBSQ001).